The chain runs to 159 residues: Ecotin (159 aa).

An N-terminal signal peptide occupies residues methionine 1–alanine 22. Cysteines 68 and 105 form a disulfide.

This sequence belongs to the protease inhibitor I11 (ecotin) family. As to quaternary structure, homodimer.

It is found in the periplasm. General inhibitor of family S1 serine proteases. The chain is Ecotin from Pseudomonas putida (strain W619).